The following is a 166-amino-acid chain: MAHHIPPLNFGMVADDLYRSGQPNELNFPFLEKLQLKKIIFLAPDDPSQQFQNFVEDQDIELIHLGMDTHQNPWNPISEEIVISALKIILNPDNYPLHIMCNLGRHRTGTVVGCLRKLQRWNLTSIFEEYRRFAGSKVKLLNEQFIELFDTDLVTYNNAPQWLYLS.

The Tyrosine-protein phosphatase domain maps to 9-162; it reads NFGMVADDLY…LVTYNNAPQW (154 aa). Catalysis depends on C101, which acts as the Phosphocysteine intermediate.

It belongs to the protein-tyrosine phosphatase family.

It localises to the cytoplasm. It catalyses the reaction O-phospho-L-tyrosyl-[protein] + H2O = L-tyrosyl-[protein] + phosphate. The polypeptide is Probable tyrosine-protein phosphatase DG1060 (DG1060) (Dictyostelium discoideum (Social amoeba)).